A 394-amino-acid polypeptide reads, in one-letter code: Chorismate synthase (394 aa).

Residues Arg-42 and Arg-48 each contribute to the NADP(+) site. Residues 137-139, 258-259, Gly-302, 317-321, and Arg-343 contribute to the FMN site; these read RAS, QA, and KPIAT.

Belongs to the chorismate synthase family. As to quaternary structure, homotetramer. FMNH2 is required as a cofactor.

It carries out the reaction 5-O-(1-carboxyvinyl)-3-phosphoshikimate = chorismate + phosphate. Its pathway is metabolic intermediate biosynthesis; chorismate biosynthesis; chorismate from D-erythrose 4-phosphate and phosphoenolpyruvate: step 7/7. In terms of biological role, catalyzes the anti-1,4-elimination of the C-3 phosphate and the C-6 proR hydrogen from 5-enolpyruvylshikimate-3-phosphate (EPSP) to yield chorismate, which is the branch point compound that serves as the starting substrate for the three terminal pathways of aromatic amino acid biosynthesis. This reaction introduces a second double bond into the aromatic ring system. This Streptomyces avermitilis (strain ATCC 31267 / DSM 46492 / JCM 5070 / NBRC 14893 / NCIMB 12804 / NRRL 8165 / MA-4680) protein is Chorismate synthase.